The sequence spans 707 residues: Kinesin-like protein KIN-13B (707 aa).

A Kinesin motor domain is found at 152 to 477 (KIKVVVRKRP…LRYADRVKSL (326 aa)). ATP is bound at residue 243 to 250 (GQTGSGKT). The stretch at 619–656 (EHLNELLQEEEDLVSAHRKQVEETLDMIKEEMNLLVEA) forms a coiled coil.

This sequence belongs to the TRAFAC class myosin-kinesin ATPase superfamily. Kinesin family. KIN-13 subfamily.

The protein is Kinesin-like protein KIN-13B of Oryza sativa subsp. japonica (Rice).